The chain runs to 139 residues: Putative pre-16S rRNA nuclease (139 aa).

The protein belongs to the YqgF nuclease family.

Its subcellular location is the cytoplasm. Its function is as follows. Could be a nuclease involved in processing of the 5'-end of pre-16S rRNA. The polypeptide is Putative pre-16S rRNA nuclease (Streptococcus pyogenes serotype M3 (strain ATCC BAA-595 / MGAS315)).